The sequence spans 91 residues: Cell division topological specificity factor (91 aa).

It belongs to the MinE family.

Functionally, prevents the cell division inhibition by proteins MinC and MinD at internal division sites while permitting inhibition at polar sites. This ensures cell division at the proper site by restricting the formation of a division septum at the midpoint of the long axis of the cell. This chain is Cell division topological specificity factor, found in Caldanaerobacter subterraneus subsp. tengcongensis (strain DSM 15242 / JCM 11007 / NBRC 100824 / MB4) (Thermoanaerobacter tengcongensis).